A 115-amino-acid chain; its full sequence is NADH-ubiquinone oxidoreductase chain 3 (115 aa).

The next 3 helical transmembrane spans lie at 3–23, 55–75, and 84–104; these read FVLA…LTFW, FFLV…LLPL, and LPLM…GLTY.

The protein belongs to the complex I subunit 3 family. In terms of assembly, core subunit of respiratory chain NADH dehydrogenase (Complex I) which is composed of 45 different subunits. Interacts with TMEM186. Interacts with TMEM242.

It is found in the mitochondrion inner membrane. The catalysed reaction is a ubiquinone + NADH + 5 H(+)(in) = a ubiquinol + NAD(+) + 4 H(+)(out). Its function is as follows. Core subunit of the mitochondrial membrane respiratory chain NADH dehydrogenase (Complex I) which catalyzes electron transfer from NADH through the respiratory chain, using ubiquinone as an electron acceptor. Essential for the catalytic activity of complex I. The polypeptide is NADH-ubiquinone oxidoreductase chain 3 (Pongo pygmaeus (Bornean orangutan)).